Here is a 344-residue protein sequence, read N- to C-terminus: Membrane progestin receptor delta (344 aa).

The Cytoplasmic portion of the chain corresponds to 1-51 (MLSLKLPQLLQVHQVPRVFWEDGIMSGYRRPTSSALDCVLSSFQMTNETVN). Residues 52-72 (IWTHFLPTWYFLWRLLALAGG) traverse the membrane as a helical segment. The Extracellular portion of the chain corresponds to 73-83 (PGFRAEPYHWP). The helical transmembrane segment at 84 to 104 (LLVFLLPACLYPFASCCAHTF) threads the bilayer. At 105 to 113 (SSMSPRMRH) the chain is on the cytoplasmic side. Residues 114–134 (ICYFLDYGALSLYSLGCAFPY) traverse the membrane as a helical segment. Over 135–147 (AAYSMPASWLHGH) the chain is Extracellular. A helical membrane pass occupies residues 148–168 (LHQFFVPAAALNSFLCTGLSC). Topologically, residues 169–217 (YSRFLELESPGLSKVLRTGAFAYPFLFDNLPLFYRLGLCWGRGHGCGQE) are cytoplasmic. The helical transmembrane segment at 218 to 238 (ALSTSHGYHLFCALLTGFLFA) threads the bilayer. The Extracellular segment spans residues 239–258 (SHLPERLAPGRFDYIGHSHQ). Residues 259–279 (LFHICAVLGTHFQLEAVLADM) traverse the membrane as a helical segment. The Cytoplasmic portion of the chain corresponds to 280–292 (GSRRAWLATQEPA). The helical transmembrane segment at 293 to 313 (LGLAGTVATLVLAAAGNLLII) threads the bilayer. The Extracellular portion of the chain corresponds to 314–344 (AAFTATLLRAPSTCPLLQGGPLEGGTQAKQQ).

It belongs to the ADIPOR family. As to quaternary structure, homodimer. As to expression, brain specific. Highly expressed in the hypothalamus, also expressed in forebrain, amygdala, corpus callosum and spinal cord.

It localises to the cell membrane. Functionally, plasma membrane progesterone (P4) receptor coupled to G proteins. Seems to act through a G(s) mediated pathway. Involved in neurosteroid inhibition of apoptosis. May be involved in regulating rapid P4 signaling in the nervous system. Also binds dehydroepiandrosterone (DHEA), pregnanolone, pregnenolone and allopregnanolone. The sequence is that of Membrane progestin receptor delta from Homo sapiens (Human).